The following is a 389-amino-acid chain: Lipid-A-disaccharide synthase (389 aa).

It belongs to the LpxB family.

The enzyme catalyses a lipid X + a UDP-2-N,3-O-bis[(3R)-3-hydroxyacyl]-alpha-D-glucosamine = a lipid A disaccharide + UDP + H(+). Its pathway is bacterial outer membrane biogenesis; LPS lipid A biosynthesis. Functionally, condensation of UDP-2,3-diacylglucosamine and 2,3-diacylglucosamine-1-phosphate to form lipid A disaccharide, a precursor of lipid A, a phosphorylated glycolipid that anchors the lipopolysaccharide to the outer membrane of the cell. This is Lipid-A-disaccharide synthase from Paraburkholderia xenovorans (strain LB400).